The following is a 361-amino-acid chain: Phospho-N-acetylmuramoyl-pentapeptide-transferase (361 aa).

The next 10 membrane-spanning stretches (helical) occupy residues 27–47, 72–92, 99–119, 135–155, 169–189, 200–220, 240–260, 264–284, 289–309, and 338–358; these read GALFTAGLFVFWFGPWIISLL, TPTMGGLMILAGAVVAILLWA, VWVTLTVTLGFGAIGFYDDYL, LALEAVIAMAACVTIAVYSPA, ALLNLGWFYPLFGAFVIVGAG, GLAIVPVMIACGTFGFIAYLV, LAVVCGAVIGAGLGFLWFNAP, IFMGDTGSLALGGLLGSIAVA, IVLAIVGGLFVLEMMSVIIQV, and QVVIRFWIIAVILAMAGLATL.

Belongs to the glycosyltransferase 4 family. MraY subfamily. Mg(2+) serves as cofactor.

It is found in the cell inner membrane. It carries out the reaction UDP-N-acetyl-alpha-D-muramoyl-L-alanyl-gamma-D-glutamyl-meso-2,6-diaminopimeloyl-D-alanyl-D-alanine + di-trans,octa-cis-undecaprenyl phosphate = di-trans,octa-cis-undecaprenyl diphospho-N-acetyl-alpha-D-muramoyl-L-alanyl-D-glutamyl-meso-2,6-diaminopimeloyl-D-alanyl-D-alanine + UMP. It participates in cell wall biogenesis; peptidoglycan biosynthesis. In terms of biological role, catalyzes the initial step of the lipid cycle reactions in the biosynthesis of the cell wall peptidoglycan: transfers peptidoglycan precursor phospho-MurNAc-pentapeptide from UDP-MurNAc-pentapeptide onto the lipid carrier undecaprenyl phosphate, yielding undecaprenyl-pyrophosphoryl-MurNAc-pentapeptide, known as lipid I. The protein is Phospho-N-acetylmuramoyl-pentapeptide-transferase of Methylobacterium radiotolerans (strain ATCC 27329 / DSM 1819 / JCM 2831 / NBRC 15690 / NCIMB 10815 / 0-1).